The sequence spans 304 residues: Acetyl-coenzyme A carboxylase carboxyl transferase subunit beta (304 aa).

In terms of domain architecture, CoA carboxyltransferase N-terminal spans 26–295 (VWTKCTSCEQ…PFVEPELVEN (270 aa)). Positions 30, 33, 49, and 52 each coordinate Zn(2+). Residues 30 to 52 (CTSCEQVLYRDELRRHLEVCPKC) form a C4-type zinc finger. The segment at 281–304 (SNKPSPFVEPELVENEEQSKSDNE) is disordered.

It belongs to the AccD/PCCB family. Acetyl-CoA carboxylase is a heterohexamer composed of biotin carboxyl carrier protein (AccB), biotin carboxylase (AccC) and two subunits each of ACCase subunit alpha (AccA) and ACCase subunit beta (AccD). Zn(2+) is required as a cofactor.

The protein resides in the cytoplasm. It catalyses the reaction N(6)-carboxybiotinyl-L-lysyl-[protein] + acetyl-CoA = N(6)-biotinyl-L-lysyl-[protein] + malonyl-CoA. It functions in the pathway lipid metabolism; malonyl-CoA biosynthesis; malonyl-CoA from acetyl-CoA: step 1/1. Functionally, component of the acetyl coenzyme A carboxylase (ACC) complex. Biotin carboxylase (BC) catalyzes the carboxylation of biotin on its carrier protein (BCCP) and then the CO(2) group is transferred by the transcarboxylase to acetyl-CoA to form malonyl-CoA. This is Acetyl-coenzyme A carboxylase carboxyl transferase subunit beta from Pasteurella multocida (strain Pm70).